Here is a 371-residue protein sequence, read N- to C-terminus: tRNA-specific 2-thiouridylase MnmA (371 aa).

Residues 16–23 (GMSGGVDS) and Met-42 contribute to the ATP site. The interval 102–104 (NPD) is interaction with target base in tRNA. The active-site Nucleophile is the Cys-107. A disulfide bond links Cys-107 and Cys-204. Gly-132 is an ATP binding site. An interaction with tRNA region spans residues 154-156 (KDQ). The active-site Cysteine persulfide intermediate is Cys-204. The segment at 316–317 (RY) is interaction with tRNA.

It belongs to the MnmA/TRMU family.

The protein resides in the cytoplasm. It catalyses the reaction S-sulfanyl-L-cysteinyl-[protein] + uridine(34) in tRNA + AH2 + ATP = 2-thiouridine(34) in tRNA + L-cysteinyl-[protein] + A + AMP + diphosphate + H(+). Its function is as follows. Catalyzes the 2-thiolation of uridine at the wobble position (U34) of tRNA, leading to the formation of s(2)U34. In Shewanella piezotolerans (strain WP3 / JCM 13877), this protein is tRNA-specific 2-thiouridylase MnmA.